The sequence spans 71 residues: Mitotic-spindle organizing protein 1 (71 aa).

The protein belongs to the MOZART1 family. As to quaternary structure, part of the gamma-tubulin complex.

It is found in the cytoplasm. It localises to the cytoskeleton. Its subcellular location is the microtubule organizing center. The protein localises to the spindle pole body. In terms of biological role, required for gamma-tubulin complex recruitment to the microtubule organizing center (MTOC). This Aspergillus clavatus (strain ATCC 1007 / CBS 513.65 / DSM 816 / NCTC 3887 / NRRL 1 / QM 1276 / 107) protein is Mitotic-spindle organizing protein 1.